The primary structure comprises 310 residues: Pantothenate kinase (310 aa).

95–102 (GSVAVGKS) is a binding site for ATP.

The protein belongs to the prokaryotic pantothenate kinase family.

Its subcellular location is the cytoplasm. The catalysed reaction is (R)-pantothenate + ATP = (R)-4'-phosphopantothenate + ADP + H(+). The protein operates within cofactor biosynthesis; coenzyme A biosynthesis; CoA from (R)-pantothenate: step 1/5. This is Pantothenate kinase from Mycobacteroides abscessus (strain ATCC 19977 / DSM 44196 / CCUG 20993 / CIP 104536 / JCM 13569 / NCTC 13031 / TMC 1543 / L948) (Mycobacterium abscessus).